We begin with the raw amino-acid sequence, 232 residues long: 2,3,4,5-tetrahydropyridine-2,6-dicarboxylate N-acetyltransferase (232 aa).

It belongs to the transferase hexapeptide repeat family. DapH subfamily.

It carries out the reaction (S)-2,3,4,5-tetrahydrodipicolinate + acetyl-CoA + H2O = L-2-acetamido-6-oxoheptanedioate + CoA. It participates in amino-acid biosynthesis; L-lysine biosynthesis via DAP pathway; LL-2,6-diaminopimelate from (S)-tetrahydrodipicolinate (acetylase route): step 1/3. In terms of biological role, catalyzes the transfer of an acetyl group from acetyl-CoA to tetrahydrodipicolinate. This Streptococcus sanguinis (strain SK36) protein is 2,3,4,5-tetrahydropyridine-2,6-dicarboxylate N-acetyltransferase.